We begin with the raw amino-acid sequence, 868 residues long: Leucine--tRNA ligase (868 aa).

A 'HIGH' region motif is present at residues 42 to 52; sequence PYPSGKLHMGH. The 'KMSKS' region signature appears at 627 to 631; it reads KMSKS. Lysine 630 contributes to the ATP binding site.

This sequence belongs to the class-I aminoacyl-tRNA synthetase family.

Its subcellular location is the cytoplasm. The catalysed reaction is tRNA(Leu) + L-leucine + ATP = L-leucyl-tRNA(Leu) + AMP + diphosphate. The protein is Leucine--tRNA ligase of Pseudomonas putida (strain ATCC 700007 / DSM 6899 / JCM 31910 / BCRC 17059 / LMG 24140 / F1).